Reading from the N-terminus, the 377-residue chain is Flagellin D (377 aa).

Coiled coils occupy residues serine 103–threonine 129 and alanine 310–threonine 339.

This sequence belongs to the bacterial flagellin family. As to quaternary structure, heteromer of multiple flagellin subunits including FlaA, FlaB, FlaC, FlaD and FlaE.

The protein localises to the secreted. It localises to the bacterial flagellum. Flagellin is the subunit protein which polymerizes to form the filaments of bacterial flagella. FlaD is not essential for flagellar synthesis and motility. The chain is Flagellin D (flaD) from Vibrio cholerae serotype O1 (strain ATCC 39315 / El Tor Inaba N16961).